We begin with the raw amino-acid sequence, 218 residues long: uncharacterized protein (218 aa).

Residues Met184–Ala202 show a composition bias toward basic and acidic residues. A disordered region spans residues Met184–Lys218. The span at Gln205–Lys218 shows a compositional bias: basic residues.

This is an uncharacterized protein from Mycoplasma pneumoniae (strain ATCC 29342 / M129 / Subtype 1) (Mycoplasmoides pneumoniae).